A 435-amino-acid chain; its full sequence is Cytochrome c biogenesis protein CcsB (435 aa).

The next 3 membrane-spanning stretches (helical) occupy residues 14–34, 72–92, and 162–182; these read LRLAILLLLLIAGASALGTIL, SVWFLSLLAWLGLALILCSWR, and VGPLLVHTGLVLLLIGAAWGA.

This sequence belongs to the Ccs1/CcsB family. In terms of assembly, may interact with CcsA.

It localises to the cellular thylakoid membrane. Functionally, required during biogenesis of c-type cytochromes (cytochrome c6 and cytochrome f) at the step of heme attachment. This Synechococcus sp. (strain CC9311) protein is Cytochrome c biogenesis protein CcsB.